The primary structure comprises 73 residues: Translation initiation factor IF-1 (73 aa).

An S1-like domain is found at M1 to K73.

The protein belongs to the IF-1 family. In terms of assembly, component of the 30S ribosomal translation pre-initiation complex which assembles on the 30S ribosome in the order IF-2 and IF-3, IF-1 and N-formylmethionyl-tRNA(fMet); mRNA recruitment can occur at any time during PIC assembly.

It localises to the cytoplasm. In terms of biological role, one of the essential components for the initiation of protein synthesis. Stabilizes the binding of IF-2 and IF-3 on the 30S subunit to which N-formylmethionyl-tRNA(fMet) subsequently binds. Helps modulate mRNA selection, yielding the 30S pre-initiation complex (PIC). Upon addition of the 50S ribosomal subunit IF-1, IF-2 and IF-3 are released leaving the mature 70S translation initiation complex. The sequence is that of Translation initiation factor IF-1 from Arthrobacter sp. (strain FB24).